We begin with the raw amino-acid sequence, 192 residues long: Thymidine kinase (192 aa).

ATP contacts are provided by residues S9–S16 and D87–Q90. E88 (proton acceptor) is an active-site residue. C145, C147, C182, and H185 together coordinate Zn(2+).

Belongs to the thymidine kinase family. Homotetramer.

It localises to the cytoplasm. It carries out the reaction thymidine + ATP = dTMP + ADP + H(+). This Aliivibrio fischeri (strain ATCC 700601 / ES114) (Vibrio fischeri) protein is Thymidine kinase.